A 219-amino-acid chain; its full sequence is Putative zinc metalloprotease YwhC (219 aa).

A helical transmembrane segment spans residues phenylalanine 4–threonine 24. Histidine 26 contacts Zn(2+). Residue glutamate 27 is part of the active site. Residue histidine 30 coordinates Zn(2+). The next 4 helical transmembrane spans lie at proline 52–alanine 72, isoleucine 94–methionine 114, phenylalanine 132–proline 152, and phenylalanine 180–leucine 200.

It belongs to the peptidase M50B family. Zn(2+) serves as cofactor.

It is found in the cell membrane. This Bacillus subtilis (strain 168) protein is Putative zinc metalloprotease YwhC (ywhC).